The following is an 880-amino-acid chain: Valine--tRNA ligase (880 aa).

Positions 49-59 (PNVTGKLHLGH) match the 'HIGH' region motif. The 'KMSKS' region motif lies at 525-529 (KMSKS). Lysine 528 is an ATP binding site. A coiled-coil region spans residues 809–880 (LEGLINIEEE…VKARLAELKR (72 aa)).

Belongs to the class-I aminoacyl-tRNA synthetase family. ValS type 1 subfamily. In terms of assembly, monomer.

It localises to the cytoplasm. The enzyme catalyses tRNA(Val) + L-valine + ATP = L-valyl-tRNA(Val) + AMP + diphosphate. Its function is as follows. Catalyzes the attachment of valine to tRNA(Val). As ValRS can inadvertently accommodate and process structurally similar amino acids such as threonine, to avoid such errors, it has a 'posttransfer' editing activity that hydrolyzes mischarged Thr-tRNA(Val) in a tRNA-dependent manner. This Geobacillus kaustophilus (strain HTA426) protein is Valine--tRNA ligase.